A 123-amino-acid chain; its full sequence is Venom protein 29 (123 aa).

The N-terminal stretch at 1–18 (MNKLFLFTLLVTLWSVKG) is a signal peptide.

In terms of processing, contains 3 disulfide bonds. In terms of tissue distribution, expressed by the venom gland.

The protein resides in the secreted. This Lychas mucronatus (Chinese swimming scorpion) protein is Venom protein 29.